Here is a 213-residue protein sequence, read N- to C-terminus: FMN-dependent NADH:quinone oxidoreductase (213 aa).

FMN is bound at residue 17–19; it reads SSS.

It belongs to the azoreductase type 1 family. Homodimer. It depends on FMN as a cofactor.

It carries out the reaction 2 a quinone + NADH + H(+) = 2 a 1,4-benzosemiquinone + NAD(+). The catalysed reaction is N,N-dimethyl-1,4-phenylenediamine + anthranilate + 2 NAD(+) = 2-(4-dimethylaminophenyl)diazenylbenzoate + 2 NADH + 2 H(+). In terms of biological role, quinone reductase that provides resistance to thiol-specific stress caused by electrophilic quinones. Functionally, also exhibits azoreductase activity. Catalyzes the reductive cleavage of the azo bond in aromatic azo compounds to the corresponding amines. This is FMN-dependent NADH:quinone oxidoreductase from Ruminiclostridium cellulolyticum (strain ATCC 35319 / DSM 5812 / JCM 6584 / H10) (Clostridium cellulolyticum).